The chain runs to 238 residues: Ubiquinone/menaquinone biosynthesis C-methyltransferase UbiE (238 aa).

The S-adenosyl-L-methionine site is built by Thr62 and Asp82.

Belongs to the class I-like SAM-binding methyltransferase superfamily. MenG/UbiE family.

It carries out the reaction a 2-demethylmenaquinol + S-adenosyl-L-methionine = a menaquinol + S-adenosyl-L-homocysteine + H(+). The catalysed reaction is a 2-methoxy-6-(all-trans-polyprenyl)benzene-1,4-diol + S-adenosyl-L-methionine = a 5-methoxy-2-methyl-3-(all-trans-polyprenyl)benzene-1,4-diol + S-adenosyl-L-homocysteine + H(+). Its pathway is quinol/quinone metabolism; menaquinone biosynthesis; menaquinol from 1,4-dihydroxy-2-naphthoate: step 2/2. The protein operates within cofactor biosynthesis; ubiquinone biosynthesis. Its function is as follows. Methyltransferase required for the conversion of demethylmenaquinol (DMKH2) to menaquinol (MKH2) and the conversion of 2-polyprenyl-6-methoxy-1,4-benzoquinol (DDMQH2) to 2-polyprenyl-3-methyl-6-methoxy-1,4-benzoquinol (DMQH2). The sequence is that of Ubiquinone/menaquinone biosynthesis C-methyltransferase UbiE from Wolbachia pipientis wMel.